Here is a 557-residue protein sequence, read N- to C-terminus: 6-phosphofructo-2-kinase/fructose-2,6-bisphosphatase 2 (557 aa).

Positions 1–16 (MSENSTFSTEDSSSSS) are enriched in low complexity. The disordered stretch occupies residues 1–21 (MSENSTFSTEDSSSSSYKPHA). Residue serine 2 is modified to N-acetylserine. Residues 2 to 251 (SENSTFSTED…VYYLMNIHVH (250 aa)) are 6-phosphofructo-2-kinase. Serine 32 carries the phosphoserine; by PKA modification. 48-56 (GLPARGKTY) serves as a coordination point for ATP. The beta-D-fructose 6-phosphate site is built by arginine 81 and arginine 105. Aspartate 131 is an active-site residue. Residues threonine 133 and arginine 139 each contribute to the beta-D-fructose 6-phosphate site. Cysteine 161 is an active-site residue. 170–175 (NILEVK) contacts ATP. Beta-D-fructose 6-phosphate contacts are provided by lysine 175, arginine 196, and tyrosine 200. The segment at 252 to 557 (PRTIYLCRHG…PSMASLTLLS (306 aa)) is fructose-2,6-bisphosphatase. Residue arginine 259 participates in beta-D-fructose 2,6-bisphosphate binding. Catalysis depends on histidine 260, which acts as the Tele-phosphohistidine intermediate. Residues asparagine 266 and glycine 272 each coordinate beta-D-fructose 2,6-bisphosphate. Residue glutamate 329 is the Proton donor/acceptor of the active site. Residues tyrosine 340, arginine 354, lysine 358, tyrosine 369, glutamine 395, and arginine 399 each contribute to the beta-D-fructose 2,6-bisphosphate site. ATP is bound at residue 351-354 (FALR). ATP-binding positions include 395–399 (QAVMR) and tyrosine 431. Positions 449-495 (RDKPTHNFPKSQTPVRMRRNSFTPLSSSNTIRRPRNYSVGSRPLKPL) are disordered. The span at 456 to 479 (FPKSQTPVRMRRNSFTPLSSSNTI) shows a compositional bias: polar residues. Serine 469 is modified (phosphoserine). Threonine 471 carries the post-translational modification Phosphothreonine. Phosphothreonine; by PKC is present on threonine 478. Serine 486 and serine 496 each carry phosphoserine.

It in the C-terminal section; belongs to the phosphoglycerate mutase family. In terms of assembly, homodimer. Forms a heterodimer with PFKFB3. In terms of processing, phosphorylation by AMPK stimulates activity.

It carries out the reaction beta-D-fructose 2,6-bisphosphate + H2O = beta-D-fructose 6-phosphate + phosphate. The catalysed reaction is beta-D-fructose 6-phosphate + ATP = beta-D-fructose 2,6-bisphosphate + ADP + H(+). Its activity is regulated as follows. Phosphorylation results in the activation of the kinase activity. Its function is as follows. Synthesis and degradation of fructose 2,6-bisphosphate. The protein is 6-phosphofructo-2-kinase/fructose-2,6-bisphosphatase 2 (Pfkfb2) of Rattus norvegicus (Rat).